The chain runs to 440 residues: UDP-glycosyltransferase 87A1 (440 aa).

UDP-alpha-D-glucose is bound by residues serine 263, 312 to 314 (CDQ), 329 to 337 (HCGYNSTLE), and 351 to 354 (FWDQ).

Belongs to the UDP-glycosyltransferase family.

The sequence is that of UDP-glycosyltransferase 87A1 (UGT87A1) from Arabidopsis thaliana (Mouse-ear cress).